A 417-amino-acid polypeptide reads, in one-letter code: Ribonuclease T2-like (417 aa).

The first 22 residues, 1-22 (MSSISGFLGAIPGAQQILQTMA), serve as a signal peptide directing secretion. 5 cysteine pairs are disulfide-bonded: Cys-45/Cys-63, Cys-52/Cys-99, Cys-62/Cys-165, Cys-107/Cys-157, and Cys-229/Cys-264. His-92 is an active-site residue. Residue Asn-115 is glycosylated (N-linked (GlcNAc...) asparagine). Catalysis depends on residues Glu-150 and His-154. The disordered stretch occupies residues 274-296 (KTPNKDPGHGHEPTKTRHPHGPT). Over residues 276 to 288 (PNKDPGHGHEPTK) the composition is skewed to basic and acidic residues. The N-linked (GlcNAc...) asparagine glycan is linked to Asn-383.

Belongs to the RNase T2 family.

The protein localises to the vacuole lumen. It is found in the cytoplasm. It catalyses the reaction a ribonucleotidyl-ribonucleotide-RNA + H2O = a 3'-end 3'-phospho-ribonucleotide-RNA + a 5'-end dephospho-ribonucleoside-RNA + H(+). Its function is as follows. Rnase which modulates cell survival under stress conditions. Released from the vacuole to the cytoplasm during stress to promote tRNA and rRNA cleavage and to activate separately a downstream pathway that promotes cell death. Involved in cell size, vacuolar morphology and growth at high temperatures and high salt concentration. The sequence is that of Ribonuclease T2-like (rny1) from Emericella nidulans (strain FGSC A4 / ATCC 38163 / CBS 112.46 / NRRL 194 / M139) (Aspergillus nidulans).